Here is a 273-residue protein sequence, read N- to C-terminus: Large ribosomal subunit protein uL2 (273 aa).

The interval 196 to 273 (GNSDHGLESS…SSKYIIERRK (78 aa)) is disordered. Basic residues-rich tracts occupy residues 209–220 (GRTRWMGRRPRN) and 255–264 (LKTRAPKKQS).

It belongs to the universal ribosomal protein uL2 family. As to quaternary structure, part of the 50S ribosomal subunit. Forms a bridge to the 30S subunit in the 70S ribosome.

One of the primary rRNA binding proteins. Required for association of the 30S and 50S subunits to form the 70S ribosome, for tRNA binding and peptide bond formation. It has been suggested to have peptidyltransferase activity; this is somewhat controversial. Makes several contacts with the 16S rRNA in the 70S ribosome. In Phocaeicola vulgatus (strain ATCC 8482 / DSM 1447 / JCM 5826 / CCUG 4940 / NBRC 14291 / NCTC 11154) (Bacteroides vulgatus), this protein is Large ribosomal subunit protein uL2.